Reading from the N-terminus, the 230-residue chain is Orotidine 5'-phosphate decarboxylase (230 aa).

Residues aspartate 11, lysine 34, 61–70 (DLKLHDIPNT), threonine 117, arginine 179, glutamine 188, glycine 208, and arginine 209 each bind substrate. The active-site Proton donor is lysine 63.

This sequence belongs to the OMP decarboxylase family. Type 1 subfamily. Homodimer.

The catalysed reaction is orotidine 5'-phosphate + H(+) = UMP + CO2. It functions in the pathway pyrimidine metabolism; UMP biosynthesis via de novo pathway; UMP from orotate: step 2/2. Its function is as follows. Catalyzes the decarboxylation of orotidine 5'-monophosphate (OMP) to uridine 5'-monophosphate (UMP). The sequence is that of Orotidine 5'-phosphate decarboxylase from Streptococcus pyogenes serotype M1.